Reading from the N-terminus, the 697-residue chain is UBA domain-containing protein 7 (697 aa).

The disordered stretch occupies residues 1–94 (MDDLLDFNFY…STPKSSNYDP (94 aa)). The span at 13–32 (STPSNQNNYSNNNSRTPSYS) shows a compositional bias: low complexity. Residues 62–77 (KKTDNKISLKELERQK) are compositionally biased toward basic and acidic residues. Residues 81–92 (PDSNSTPKSSNY) are compositionally biased toward polar residues. One can recognise a UBA domain in the interval 181–221 (KLSSNEMYEKLRDLGFSDDQSRLALENSGSLEDAIEYILEK). The disordered stretch occupies residues 306–346 (PEILPKTPIPKRKPHKVPMNEKVSEDRITTNQSRSGNDESS). Residues 323-333 (PMNEKVSEDRI) show a composition bias toward basic and acidic residues. Residues 334-345 (TTNQSRSGNDES) show a composition bias toward polar residues. A TPR repeat occupies 412 to 445 (VEEQQSTGNELFRKGDFSQAIEEFTNSLSQLPAK). Residues 547-573 (ISSHSSESHSKRTTQQPKSTPNHTNIK) form a disordered region. Polar residues predominate over residues 559–573 (TTQQPKSTPNHTNIK). One can recognise a J domain in the interval 633–696 (CRWQKVSLSE…AWELFKQQND (64 aa)).

This Schizosaccharomyces pombe (strain 972 / ATCC 24843) (Fission yeast) protein is UBA domain-containing protein 7 (ucp7).